Reading from the N-terminus, the 480-residue chain is 2-succinylbenzoate--CoA ligase (480 aa).

It belongs to the ATP-dependent AMP-binding enzyme family. MenE subfamily.

It catalyses the reaction 2-succinylbenzoate + ATP + CoA = 2-succinylbenzoyl-CoA + AMP + diphosphate. It functions in the pathway quinol/quinone metabolism; 1,4-dihydroxy-2-naphthoate biosynthesis; 1,4-dihydroxy-2-naphthoate from chorismate: step 5/7. Its pathway is quinol/quinone metabolism; menaquinone biosynthesis. Its function is as follows. Converts 2-succinylbenzoate (OSB) to 2-succinylbenzoyl-CoA (OSB-CoA). This is 2-succinylbenzoate--CoA ligase from Oceanobacillus iheyensis (strain DSM 14371 / CIP 107618 / JCM 11309 / KCTC 3954 / HTE831).